The chain runs to 211 residues: Thiamine-phosphate synthase (211 aa).

4-amino-2-methyl-5-(diphosphooxymethyl)pyrimidine is bound by residues Gln37–Lys41 and Asn69. Mg(2+)-binding residues include Asp70 and Asp89. Residue Ser108 coordinates 4-amino-2-methyl-5-(diphosphooxymethyl)pyrimidine. Thr134–Thr136 contacts 2-[(2R,5Z)-2-carboxy-4-methylthiazol-5(2H)-ylidene]ethyl phosphate. A 4-amino-2-methyl-5-(diphosphooxymethyl)pyrimidine-binding site is contributed by Lys137. 2-[(2R,5Z)-2-carboxy-4-methylthiazol-5(2H)-ylidene]ethyl phosphate is bound by residues Gly166 and Val186 to Ser187.

It belongs to the thiamine-phosphate synthase family. The cofactor is Mg(2+).

It carries out the reaction 2-[(2R,5Z)-2-carboxy-4-methylthiazol-5(2H)-ylidene]ethyl phosphate + 4-amino-2-methyl-5-(diphosphooxymethyl)pyrimidine + 2 H(+) = thiamine phosphate + CO2 + diphosphate. The enzyme catalyses 2-(2-carboxy-4-methylthiazol-5-yl)ethyl phosphate + 4-amino-2-methyl-5-(diphosphooxymethyl)pyrimidine + 2 H(+) = thiamine phosphate + CO2 + diphosphate. The catalysed reaction is 4-methyl-5-(2-phosphooxyethyl)-thiazole + 4-amino-2-methyl-5-(diphosphooxymethyl)pyrimidine + H(+) = thiamine phosphate + diphosphate. Its pathway is cofactor biosynthesis; thiamine diphosphate biosynthesis; thiamine phosphate from 4-amino-2-methyl-5-diphosphomethylpyrimidine and 4-methyl-5-(2-phosphoethyl)-thiazole: step 1/1. In terms of biological role, condenses 4-methyl-5-(beta-hydroxyethyl)thiazole monophosphate (THZ-P) and 2-methyl-4-amino-5-hydroxymethyl pyrimidine pyrophosphate (HMP-PP) to form thiamine monophosphate (TMP). The sequence is that of Thiamine-phosphate synthase from Salmonella agona (strain SL483).